The sequence spans 124 residues: MILVDTSVWIEHLRAADARLVELLGDDEAGCHPLVIEELALGSIKQRDVVLDLLANLYQFPVVTHDEVLRLVGRRRLWGRGLGAVDANLLGSVALVGGARLWTRDKRLKAACAESGVALAEEVS.

Residues 2-112 (ILVDTSVWIE…TRDKRLKAAC (111 aa)) form the PINc domain. Residues aspartate 5 and aspartate 86 each coordinate Mg(2+).

This sequence belongs to the PINc/VapC protein family. Requires Mg(2+) as cofactor.

In terms of biological role, toxic component of a type II toxin-antitoxin (TA) system. An RNase. Its toxic effect is neutralized by coexpression with cognate antitoxin VapB32. The sequence is that of Ribonuclease VapC32 from Mycobacterium tuberculosis (strain CDC 1551 / Oshkosh).